Here is a 542-residue protein sequence, read N- to C-terminus: Chaperonin GroEL (542 aa).

Residues 29-32 (TLGP), 86-90 (DGTTT), G413, 477-479 (NAA), and D493 contribute to the ATP site.

It belongs to the chaperonin (HSP60) family. As to quaternary structure, forms a cylinder of 14 subunits composed of two heptameric rings stacked back-to-back. Interacts with the co-chaperonin GroES.

It is found in the cytoplasm. The catalysed reaction is ATP + H2O + a folded polypeptide = ADP + phosphate + an unfolded polypeptide.. Functionally, together with its co-chaperonin GroES, plays an essential role in assisting protein folding. The GroEL-GroES system forms a nano-cage that allows encapsulation of the non-native substrate proteins and provides a physical environment optimized to promote and accelerate protein folding. This chain is Chaperonin GroEL, found in Beutenbergia cavernae (strain ATCC BAA-8 / DSM 12333 / CCUG 43141 / JCM 11478 / NBRC 16432 / NCIMB 13614 / HKI 0122).